Reading from the N-terminus, the 195-residue chain is ATP-dependent Clp protease proteolytic subunit (195 aa).

The Nucleophile role is filled by S101. H126 is a catalytic residue.

It belongs to the peptidase S14 family. In terms of assembly, component of the chloroplastic Clp protease core complex.

The protein resides in the plastid. It is found in the chloroplast stroma. The catalysed reaction is Hydrolysis of proteins to small peptides in the presence of ATP and magnesium. alpha-casein is the usual test substrate. In the absence of ATP, only oligopeptides shorter than five residues are hydrolyzed (such as succinyl-Leu-Tyr-|-NHMec, and Leu-Tyr-Leu-|-Tyr-Trp, in which cleavage of the -Tyr-|-Leu- and -Tyr-|-Trp bonds also occurs).. Functionally, cleaves peptides in various proteins in a process that requires ATP hydrolysis. Has a chymotrypsin-like activity. Plays a major role in the degradation of misfolded proteins. This chain is ATP-dependent Clp protease proteolytic subunit, found in Oltmannsiellopsis viridis (Marine flagellate).